Here is a 393-residue protein sequence, read N- to C-terminus: NAD(P)H-quinone oxidoreductase subunit H, chloroplastic (393 aa).

It belongs to the complex I 49 kDa subunit family. In terms of assembly, NDH is composed of at least 16 different subunits, 5 of which are encoded in the nucleus.

It is found in the plastid. Its subcellular location is the chloroplast thylakoid membrane. It catalyses the reaction a plastoquinone + NADH + (n+1) H(+)(in) = a plastoquinol + NAD(+) + n H(+)(out). The catalysed reaction is a plastoquinone + NADPH + (n+1) H(+)(in) = a plastoquinol + NADP(+) + n H(+)(out). Its function is as follows. NDH shuttles electrons from NAD(P)H:plastoquinone, via FMN and iron-sulfur (Fe-S) centers, to quinones in the photosynthetic chain and possibly in a chloroplast respiratory chain. The immediate electron acceptor for the enzyme in this species is believed to be plastoquinone. Couples the redox reaction to proton translocation, and thus conserves the redox energy in a proton gradient. The protein is NAD(P)H-quinone oxidoreductase subunit H, chloroplastic of Morus indica (Mulberry).